The sequence spans 323 residues: Aquaporin-4 (323 aa).

Residues 1–36 (MSDRPAARRWGKCGPLCTRESIMVAFKGVWTQTFWK) are Cytoplasmic-facing. 2 S-palmitoyl cysteine lipidation sites follow: Cys-13 and Cys-17. The chain crosses the membrane as a helical span at residues 37-57 (AVTAEFLAMLIFVLLSLGSTI). The Extracellular portion of the chain corresponds to 58–69 (NWGGAEKPLPVD). Residues 70–89 (MVLISLCFGLSIATMVQCFG) form a helical membrane-spanning segment. The Cytoplasmic segment spans residues 90 to 93 (HISG). Positions 94 to 101 (GHINPAVT) form an intramembrane region, discontinuously helical. Residues 97–99 (NPA) carry the NPA 1 motif. Topologically, residues 102 to 115 (VAMVCTRRISIAKS) are cytoplasmic. Phosphoserine; by PKG is present on Ser-111. Residues 116–136 (VFYIAAQCLGAIIGAGILYLV) form a helical membrane-spanning segment. The Extracellular segment spans residues 137–155 (TPPSVVGGLGVTTVHGNLS). Residue Asn-153 is glycosylated (N-linked (GlcNAc...) asparagine). A helical membrane pass occupies residues 156 to 176 (AGHGLLVELIITFQLVFTIFA). The Cytoplasmic segment spans residues 177 to 184 (SCDSKRTD). The residue at position 180 (Ser-180) is a Phosphoserine; by PKC. A helical transmembrane segment spans residues 185–205 (VTGSIALAIGISVAIGHLFAI). N-linked (GlcNAc...) asparagine glycosylation occurs at Asn-206. Over 206-208 (NYT) the chain is Extracellular. An intramembrane region (discontinuously helical) is located at residues 209-222 (GASMNPARSFGPAV). The NPA 2 signature appears at 213-215 (NPA). Topologically, residues 223–231 (IMGNWENHW) are extracellular. A helical transmembrane segment spans residues 232-252 (IYWVGPIIGAVLAGGLYEYVF). Residues 253-323 (CPDVELKRRF…DPSGEVLSSV (71 aa)) lie on the Cytoplasmic side of the membrane. Residues Ser-276 and Ser-285 each carry the phosphoserine modification. At Thr-289 the chain carries Phosphothreonine. Ser-321 is modified (phosphoserine).

It belongs to the MIP/aquaporin (TC 1.A.8) family. In terms of assembly, homotetramer. The tetramers can form oligomeric arrays in membranes. The size of the oligomers differs between tissues and is smaller in skeletal muscle than in brain. Interaction between AQP4 oligomeric arrays in close-by cells can contribute to cell-cell adhesion. Part of a complex containing MLC1, TRPV4, HEPACAM and ATP1B1. Phosphorylation by PKC at Ser-180 reduces conductance by 50%. Phosphorylation by PKG at Ser-111 in response to glutamate increases conductance by 40%. Post-translationally, isoform 2: Palmitoylated on its N-terminal region. Isoform 1: Not palmitoylated. In terms of tissue distribution, detected in brain and lung.

The protein resides in the cell membrane. It is found in the basolateral cell membrane. Its subcellular location is the endosome membrane. It localises to the sarcolemma. The protein localises to the cell projection. The catalysed reaction is H2O(in) = H2O(out). In terms of biological role, forms a water-specific channel. Plays an important role in brain water homeostasis and in glymphatic solute transport. Required for a normal rate of water exchange across the blood brain interface. Required for normal levels of cerebrospinal fluid influx into the brain cortex and parenchyma along paravascular spaces that surround penetrating arteries, and for normal drainage of interstitial fluid along paravenous drainage pathways. Thereby, it is required for normal clearance of solutes from the brain interstitial fluid, including soluble beta-amyloid peptides derived from APP. Plays a redundant role in urinary water homeostasis and urinary concentrating ability. This is Aquaporin-4 (AQP4) from Bos taurus (Bovine).